Consider the following 113-residue polypeptide: Nucleoid-associated protein Cthe_2143 (113 aa).

This sequence belongs to the YbaB/EbfC family. In terms of assembly, homodimer.

The protein resides in the cytoplasm. It localises to the nucleoid. Functionally, binds to DNA and alters its conformation. May be involved in regulation of gene expression, nucleoid organization and DNA protection. The protein is Nucleoid-associated protein Cthe_2143 of Acetivibrio thermocellus (strain ATCC 27405 / DSM 1237 / JCM 9322 / NBRC 103400 / NCIMB 10682 / NRRL B-4536 / VPI 7372) (Clostridium thermocellum).